Reading from the N-terminus, the 30-residue chain is Cliotide T19 (30 aa).

Positions 1–30 (GSVIKCGESCLLGKCYTPGCTCSRPICKKN) form a cross-link, cyclopeptide (Gly-Asn). 3 cysteine pairs are disulfide-bonded: C6–C20, C10–C22, and C15–C27.

In terms of processing, contains 3 disulfide bonds. Post-translationally, this is a cyclic peptide. As to expression, expressed in root nodules but not in seed.

Its function is as follows. Probably participates in a plant defense mechanism. Active against Gram-negative bacterium E.coli ATCC 700926 (MIC=0.6 uM) under low-salt conditions. Not active against Gram-positive bacterium S.aureus ATCC 12600 up to a concentration of 100 uM under low-salt conditions. Exhibits immunomodulatory activity but no cytotoxicity in vitro. This Clitoria ternatea (Butterfly pea) protein is Cliotide T19.